The chain runs to 319 residues: Acetyl-coenzyme A carboxylase carboxyl transferase subunit alpha (319 aa).

A CoA carboxyltransferase C-terminal domain is found at 39–293; that stretch reads RLQKKSNDLT…KAVLEKQLHE (255 aa).

Belongs to the AccA family. As to quaternary structure, acetyl-CoA carboxylase is a heterohexamer composed of biotin carboxyl carrier protein (AccB), biotin carboxylase (AccC) and two subunits each of ACCase subunit alpha (AccA) and ACCase subunit beta (AccD).

The protein resides in the cytoplasm. It catalyses the reaction N(6)-carboxybiotinyl-L-lysyl-[protein] + acetyl-CoA = N(6)-biotinyl-L-lysyl-[protein] + malonyl-CoA. It participates in lipid metabolism; malonyl-CoA biosynthesis; malonyl-CoA from acetyl-CoA: step 1/1. In terms of biological role, component of the acetyl coenzyme A carboxylase (ACC) complex. First, biotin carboxylase catalyzes the carboxylation of biotin on its carrier protein (BCCP) and then the CO(2) group is transferred by the carboxyltransferase to acetyl-CoA to form malonyl-CoA. The protein is Acetyl-coenzyme A carboxylase carboxyl transferase subunit alpha of Neisseria gonorrhoeae (strain ATCC 700825 / FA 1090).